A 109-amino-acid chain; its full sequence is Small ribosomal subunit protein uS17 (109 aa).

This sequence belongs to the universal ribosomal protein uS17 family. Part of the 30S ribosomal subunit.

Its function is as follows. One of the primary rRNA binding proteins, it binds specifically to the 5'-end of 16S ribosomal RNA. The chain is Small ribosomal subunit protein uS17 from Thermoplasma volcanium (strain ATCC 51530 / DSM 4299 / JCM 9571 / NBRC 15438 / GSS1).